A 277-amino-acid chain; its full sequence is F420-dependent methylenetetrahydromethanopterin dehydrogenase (277 aa).

Belongs to the MTD family.

It carries out the reaction 5,10-methylenetetrahydromethanopterin + oxidized coenzyme F420-(gamma-L-Glu)(n) + 2 H(+) = 5,10-methenyl-5,6,7,8-tetrahydromethanopterin + reduced coenzyme F420-(gamma-L-Glu)(n). It functions in the pathway one-carbon metabolism; methanogenesis from CO(2); 5,10-methylene-5,6,7,8-tetrahydromethanopterin from 5,10-methenyl-5,6,7,8-tetrahydromethanopterin (coenzyme F420 route): step 1/1. Catalyzes the reversible reduction of methenyl-H(4)MPT(+) to methylene-H(4)MPT. The polypeptide is F420-dependent methylenetetrahydromethanopterin dehydrogenase (Methanococcus maripaludis (strain DSM 14266 / JCM 13030 / NBRC 101832 / S2 / LL)).